Here is an 80-residue protein sequence, read N- to C-terminus: Mitotic-spindle organizing protein 1 (80 aa).

This sequence belongs to the MOZART1 family. As to quaternary structure, part of the gamma-tubulin complex.

The protein resides in the cytoplasm. It is found in the cytoskeleton. Its subcellular location is the microtubule organizing center. It localises to the spindle pole body. In terms of biological role, required for gamma-tubulin complex recruitment to the microtubule organizing center (MTOC). This is Mitotic-spindle organizing protein 1 from Pyricularia oryzae (strain 70-15 / ATCC MYA-4617 / FGSC 8958) (Rice blast fungus).